The sequence spans 313 residues: Ribosomal RNA small subunit methyltransferase H (313 aa).

Residues 51–53 (GGH), Asp71, Phe98, Asp119, and Gln126 contribute to the S-adenosyl-L-methionine site. The tract at residues 293–313 (EEQRANPRSRSARLRVAERVS) is disordered.

The protein belongs to the methyltransferase superfamily. RsmH family.

It is found in the cytoplasm. The catalysed reaction is cytidine(1402) in 16S rRNA + S-adenosyl-L-methionine = N(4)-methylcytidine(1402) in 16S rRNA + S-adenosyl-L-homocysteine + H(+). Its function is as follows. Specifically methylates the N4 position of cytidine in position 1402 (C1402) of 16S rRNA. In Roseiflexus sp. (strain RS-1), this protein is Ribosomal RNA small subunit methyltransferase H.